A 185-amino-acid chain; its full sequence is Peptidyl-tRNA hydrolase (185 aa).

TRNA is bound at residue Y14. The Proton acceptor role is filled by H19. Positions 65, 67, and 113 each coordinate tRNA.

Belongs to the PTH family. Monomer.

The protein resides in the cytoplasm. The catalysed reaction is an N-acyl-L-alpha-aminoacyl-tRNA + H2O = an N-acyl-L-amino acid + a tRNA + H(+). Its function is as follows. Hydrolyzes ribosome-free peptidyl-tRNAs (with 1 or more amino acids incorporated), which drop off the ribosome during protein synthesis, or as a result of ribosome stalling. In terms of biological role, catalyzes the release of premature peptidyl moieties from peptidyl-tRNA molecules trapped in stalled 50S ribosomal subunits, and thus maintains levels of free tRNAs and 50S ribosomes. The sequence is that of Peptidyl-tRNA hydrolase from Rickettsia conorii (strain ATCC VR-613 / Malish 7).